Here is a 574-residue protein sequence, read N- to C-terminus: Membrane protein insertase YidC (574 aa).

The chain crosses the membrane as a helical span at residues 6 to 26; it reads VFLIFAWLMVAALLWMEWGKD. The tract at residues 45–77 is disordered; that stretch reads RDPDAAAPSAANVPSAQPIPQAGAPGTVPATSS. Transmembrane regions (helical) follow at residues 356-376, 380-400, 447-467, 489-509, and 525-545; these read FSIMAIIGQGLFWVLSHLHSF, WGWAIIGLVVLLRLALYPLSA, GGCLPLLIQMPIFFALYWVLV, PYFILPLLNISIMWATQKLTP, and PLVFGVMMAFMPAGLVLYWVV.

The protein belongs to the OXA1/ALB3/YidC family. Type 1 subfamily. In terms of assembly, interacts with the Sec translocase complex via SecD. Specifically interacts with transmembrane segments of nascent integral membrane proteins during membrane integration.

The protein resides in the cell inner membrane. Required for the insertion and/or proper folding and/or complex formation of integral membrane proteins into the membrane. Involved in integration of membrane proteins that insert both dependently and independently of the Sec translocase complex, as well as at least some lipoproteins. Aids folding of multispanning membrane proteins. The polypeptide is Membrane protein insertase YidC (Xanthomonas euvesicatoria pv. vesicatoria (strain 85-10) (Xanthomonas campestris pv. vesicatoria)).